We begin with the raw amino-acid sequence, 498 residues long: ATP synthase subunit beta, chloroplastic (498 aa).

172–179 provides a ligand contact to ATP; it reads GGAGVGKT.

It belongs to the ATPase alpha/beta chains family. In terms of assembly, F-type ATPases have 2 components, CF(1) - the catalytic core - and CF(0) - the membrane proton channel. CF(1) has five subunits: alpha(3), beta(3), gamma(1), delta(1), epsilon(1). CF(0) has four main subunits: a(1), b(1), b'(1) and c(9-12).

The protein localises to the plastid. The protein resides in the chloroplast thylakoid membrane. It carries out the reaction ATP + H2O + 4 H(+)(in) = ADP + phosphate + 5 H(+)(out). In terms of biological role, produces ATP from ADP in the presence of a proton gradient across the membrane. The catalytic sites are hosted primarily by the beta subunits. In Panax ginseng (Korean ginseng), this protein is ATP synthase subunit beta, chloroplastic.